The primary structure comprises 501 residues: ATP synthase subunit alpha (501 aa).

169–176 (GDRQTGKT) contacts ATP.

Belongs to the ATPase alpha/beta chains family. F-type ATPases have 2 components, CF(1) - the catalytic core - and CF(0) - the membrane proton channel. CF(1) has five subunits: alpha(3), beta(3), gamma(1), delta(1), epsilon(1). CF(0) has three main subunits: a(1), b(2) and c(9-12). The alpha and beta chains form an alternating ring which encloses part of the gamma chain. CF(1) is attached to CF(0) by a central stalk formed by the gamma and epsilon chains, while a peripheral stalk is formed by the delta and b chains.

It localises to the cell membrane. It catalyses the reaction ATP + H2O + 4 H(+)(in) = ADP + phosphate + 5 H(+)(out). In terms of biological role, produces ATP from ADP in the presence of a proton gradient across the membrane. The alpha chain is a regulatory subunit. The sequence is that of ATP synthase subunit alpha from Desulforamulus reducens (strain ATCC BAA-1160 / DSM 100696 / MI-1) (Desulfotomaculum reducens).